Consider the following 351-residue polypeptide: Foldase protein PrsA 1 (351 aa).

Positions 1 to 22 (MKNSNKLIASVVTLASVMALAA) are cleaved as a signal peptide. Cys23 is lipidated: N-palmitoyl cysteine. The S-diacylglycerol cysteine moiety is linked to residue Cys23. The PpiC domain occupies 145 to 240 (TPTMAVEMIT…KKFYIVKVTK (96 aa)). Low complexity-rich tracts occupy residues 303-317 (KTKAASESSTTSESS) and 326-351 (ESEQTQTSSAEEPTETEAQTQEPAAQ). A disordered region spans residues 303–351 (KTKAASESSTTSESSKAAEENPSESEQTQTSSAEEPTETEAQTQEPAAQ).

The protein belongs to the PrsA family.

The protein resides in the cell membrane. It carries out the reaction [protein]-peptidylproline (omega=180) = [protein]-peptidylproline (omega=0). Its function is as follows. Plays a major role in protein secretion by helping the post-translocational extracellular folding of several secreted proteins. The sequence is that of Foldase protein PrsA 1 (prsA1) from Streptococcus pyogenes serotype M18 (strain MGAS8232).